Reading from the N-terminus, the 115-residue chain is Transcription and mRNA export factor ENY2 (115 aa).

It belongs to the ENY2 family. Component of a deubiquitination module (DUB module) formed by ENY2, SGF11, and UBP22 in Arabidopsis. Interacts directly with SGF11, but not with UBP22. Interacts with MOS4. As to expression, expressed in roots, cotyledons, leaves and upper part of sepals.

It is found in the nucleus. Its subcellular location is the nucleoplasm. Component of a deubiquitination module (DUB module) that specifically deubiquinates monoubiquinated histone H2B (H2Bub). Does not seem to be a component of the TREX-2 complex. Seems to act independently of the SAGA multiprotein complex. The DUB module is responsible for the major H2Bub deubiquitinase activity in Arabidopsis. The sequence is that of Transcription and mRNA export factor ENY2 from Arabidopsis thaliana (Mouse-ear cress).